The sequence spans 248 residues: tRNA (guanine-N(1)-)-methyltransferase (248 aa).

S-adenosyl-L-methionine-binding positions include glycine 117 and 137-142; that span reads IGDFVL.

Belongs to the RNA methyltransferase TrmD family. In terms of assembly, homodimer.

It localises to the cytoplasm. The enzyme catalyses guanosine(37) in tRNA + S-adenosyl-L-methionine = N(1)-methylguanosine(37) in tRNA + S-adenosyl-L-homocysteine + H(+). Its function is as follows. Specifically methylates guanosine-37 in various tRNAs. The polypeptide is tRNA (guanine-N(1)-)-methyltransferase (Polynucleobacter asymbioticus (strain DSM 18221 / CIP 109841 / QLW-P1DMWA-1) (Polynucleobacter necessarius subsp. asymbioticus)).